A 425-amino-acid polypeptide reads, in one-letter code: UPF0761 membrane protein XC_3370 (425 aa).

The next 6 helical transmembrane spans lie at 48 to 68 (VFALVPLAIVVFGVLSAFPAF), 105 to 125 (FTVAGMVALVASLLITLHSIE), 154 to 174 (GTMLAAASMAMAAYVFALPLF), 182 to 202 (LAEFAWRLAPMAVEFVCIVLI), 216 to 236 (ALPGALLAVILMEIVKWGFGF), and 250 to 270 (ALSALPILLLWIYLSWVSVLL).

This sequence belongs to the UPF0761 family.

It localises to the cell inner membrane. This Xanthomonas campestris pv. campestris (strain 8004) protein is UPF0761 membrane protein XC_3370.